Here is a 1659-residue protein sequence, read N- to C-terminus: Fatty acid synthase subunit alpha (1659 aa).

The segment at 114-139 (TQAQASGGAGTIAGAGSSTAPVTAPP) is disordered. Residues 160 to 235 (AQAFEIVRTL…AALQKTFTGQ (76 aa)) enclose the Carrier domain. O-(pantetheine 4'-phosphoryl)serine is present on serine 195. The tract at residues 588-826 (GRSVLITGAG…LCLMFNTMCS (239 aa)) is ketoreductase (KR) domain. Residues 1030 to 1575 (KQLLHEVLIQ…QKGAQTIVVH (546 aa)) form the Ketosynthase family 3 (KS3) domain. Active-site for beta-ketoacyl synthase activity residues include cysteine 1217, histidine 1458, and histidine 1499. The disordered stretch occupies residues 1631-1659 (ETLLDPTPPQTNVDDRVARSIVQQESAEP).

It belongs to the thiolase-like superfamily. Fungal fatty acid synthetase subunit alpha family. [Alpha(6)beta(6)] hexamers of two multifunctional subunits (alpha and beta). In terms of processing, 4'-phosphopantetheine is transferred from CoA to a specific serine of the acyl carrier domain by the C-terminal PPT domain. This modification is essential for activity because fatty acids are bound in thioester linkage to the sulfhydryl of the prosthetic group.

It carries out the reaction acetyl-CoA + n malonyl-CoA + 2n NADPH + 4n H(+) = a long-chain-acyl-CoA + n CoA + n CO2 + 2n NADP(+).. The enzyme catalyses a fatty acyl-[ACP] + malonyl-[ACP] + H(+) = a 3-oxoacyl-[ACP] + holo-[ACP] + CO2. The catalysed reaction is a (3R)-hydroxyacyl-[ACP] + NADP(+) = a 3-oxoacyl-[ACP] + NADPH + H(+). It functions in the pathway secondary metabolite biosynthesis. Functionally, fatty acid synthase subunit alpha; part of the gene cluster that mediates the biosynthesis of aspercryptins, linear lipopeptides built from six amino acids including 2 highly unusual and nonproteogenic amino acids, 2-amino-octanoic acid (2aoa) and 2-amino-dodecanol (2adol). The core structure of aspercryptins is as follows: Ser/Ala-Thr-Ile/Val-2aoa-Asn-2adol. The first step of aspercryptin biosynthesis is the generation of the fatty acid precursors, octanoic and dodecanoic acids, by the FAS subunits atnF and atnM. The fatty acid precursors are likely transformed into the corresponding alpha-amino fatty acids in three steps. First, they are hydroxylated by the cytochrome P450 monooxygenase atnE, then oxidized to the corresponding alpha-keto acids by the NAD(P)-dependent oxidoreductase atnD, and finally converted to the alpha-amino fatty acids by the PLP-dependent aminotransferases atnH or atnJ. the alpha-amino fatty acids, 2-amino-octanoic and 2-amino-dodecanoic acids, are recognized, activated, and covalently tethered to the NRPS atnA by its fourth and sixth adenylation domains. The second module of atnA is the Thr module and contains an epimerase (E) domain responsible for the epimerization of Thr to D-allo-Thr. Additionally, despite atnA having only one epimerase domain, the first amino acid of aspercryptin A1 is D-Ser, suggesting that serine is either loaded directly as D-Ser on the first module or that the epimerase domain in the threonine module epimerizes both L-Ser and L-Thr. After condensation of the hexapeptide of aspercryptin, the C-terminal reductase (TE) domain might be involved in the reductive release and production of the aldehyde hexapeptide. Further reduction would generate aspercryptins. The variety of aspercryptins produced reflects the flexibility of the atnA NRPS, allowing incorporation of alanine instead of serine, valine for isoleucine, and a C10 fatty amino alcohol instead of the C12 version. AtnB seems to be involved in the selectivity for Ile versus Val by the third module. Moreover, type B, C and D aspercryptins have an additional N-terminal cichorine, acetyl and propionyl group respectively. In Emericella nidulans (strain FGSC A4 / ATCC 38163 / CBS 112.46 / NRRL 194 / M139) (Aspergillus nidulans), this protein is Fatty acid synthase subunit alpha.